Here is a 42-residue protein sequence, read N- to C-terminus: Histone H1B (42 aa).

The 42-residue stretch at 1–42 (TYYELIKAAILALKERNGSSAQAIKKYILENNKIEFQQTFLR) folds into the H15 domain.

This sequence belongs to the histone H1/H5 family.

Its subcellular location is the nucleus. The protein resides in the chromosome. In terms of biological role, histones H1 are necessary for the condensation of nucleosome chains into higher-order structures. The protein is Histone H1B of Olisthodiscus luteus (Marine phytoflagellate).